Reading from the N-terminus, the 2116-residue chain is Unconventional myosin-VIIb (2116 aa).

In terms of domain architecture, Myosin motor spans 65-760 (QGVDDMIRLG…QDTLLEVQRS (696 aa)). Position 158 to 165 (158 to 165 (GESGAGKT)) interacts with ATP. The tract at residues 637–659 (LDQLMKILTNCQPYFIRCIKPNE) is actin-binding. IQ domains follow at residues 745–765 (IFLR…VLDR), 763–792 (LDRA…AAVT), 786–815 (QRRA…GFER), 814–834 (ERLQ…AMRQ), 832–861 (MRQR…AVVV), and 855–884 (KRRA…NAPL). A Phosphoserine modification is found at Ser-904. The tract at residues 916-1542 (EKVFGFLPAM…KKQGLLASEN (627 aa)) is mediates interaction with ANKS4B. Residues 989–1192 (HIRRPLRYPL…PTWLELQAVK (204 aa)) form the MyTH4 1 domain. Positions 1197–1506 (IPIQVILATG…EGLKERSIFA (310 aa)) constitute an FERM 1 domain. A Phosphoserine modification is found at Ser-1371. In terms of domain architecture, SH3 spans 1501-1567 (ERSIFAMALQ…PMACLYTIPT (67 aa)). Residues 1501–2116 (ERSIFAMALQ…GSKAPALAST (616 aa)) form a mediates interaction with CDHR2, CDHR5 and USH1C region. MyTH4 domains follow at residues 1644-1793 (YSCE…EAAE) and 1790-1896 (EAAE…KLWL). Ser-1645 bears the Phosphoserine mark. One can recognise an FERM 2 domain in the interval 1799–2102 (ICHKIYFPND…SYVQQLLSAM (304 aa)).

Belongs to the TRAFAC class myosin-kinesin ATPase superfamily. Myosin family. In terms of assembly, part of the IMAC/intermicrovillar adhesion complex/intermicrovillar tip-link complex composed of ANKS4B, MYO7B, USH1C, CDHR2 and CDHR5. Interacts with CDHR2. Interacts with CDHR5. Interacts with USH1C. Interacts with ANKS4B; requires initial interaction with USH1C. Interacts with CALML4; the interaction mediates the association of CALML4 with the IMAC/intermicrovillar adhesion complex.

It localises to the cytoplasm. It is found in the cytoskeleton. The protein localises to the cell projection. The protein resides in the microvillus. In terms of biological role, myosins are actin-based motor molecules with ATPase activity. Their highly divergent tails are presumed to bind to membranous compartments, which would be moved relative to actin filaments. As part of the intermicrovillar adhesion complex/IMAC plays a role in epithelial brush border differentiation, controlling microvilli organization and length. May link the complex to the actin core bundle of microvilli. The sequence is that of Unconventional myosin-VIIb from Homo sapiens (Human).